Consider the following 179-residue polypeptide: Natural killer cells antigen CD94 (179 aa).

Residues 1 to 10 (MAVSQTTLWN) lie on the Cytoplasmic side of the membrane. A helical; Signal-anchor for type II membrane protein membrane pass occupies residues 11–31 (LISGILGVICLLLMTTMGILL). Residues 32–179 (KNLLLTESIQ…SRFICKQELM (148 aa)) lie on the Extracellular side of the membrane. Disulfide bonds link cysteine 58/cysteine 70, cysteine 61/cysteine 72, cysteine 89/cysteine 174, and cysteine 152/cysteine 166. The region spanning 68–175 (HQCNCYLFFD…CEDKSRFICK (108 aa)) is the C-type lectin domain. Asparagine 93 and asparagine 125 each carry an N-linked (GlcNAc...) asparagine glycan.

As to quaternary structure, can form disulfide-bonded heterodimer with NKG2 family members KLRC1 and KLRC2. KLRD1-KLRC1 heterodimer interacts with peptide-bound MHC-E-B2M heterotrimeric complex. KLRD1 plays a prominent role in directly interacting with MHC-E. KLRD1-KLRC1 interacts with much higher affinity with peptide-bound MHC-E-B2M than KLRD1-KLRC2. Interacts with the adapter protein TYROBP/DAP12; this interaction is required for cell surface expression and cell activation.

Its subcellular location is the cell membrane. In terms of biological role, immune receptor involved in self-nonself discrimination. In complex with KLRC1 or KLRC2 on cytotoxic and regulatory lymphocyte subsets, recognizes non-classical major histocompatibility (MHC) class Ib molecule MHC-E loaded with self-peptides derived from the signal sequence of classical MHC class Ia and non-classical MHC class Ib molecules. Enables cytotoxic cells to monitor the expression of MHC class I molecules in healthy cells and to tolerate self. Primarily functions as a ligand binding subunit as it lacks the capacity to signal. Functionally, KLRD1-KLRC1 acts as an immune inhibitory receptor. Key inhibitory receptor on natural killer (NK) cells that regulates their activation and effector functions. Dominantly counteracts T cell receptor signaling on a subset of memory/effector CD8-positive T cells as part of an antigen-driven response to avoid autoimmunity. On intraepithelial CD8-positive gamma-delta regulatory T cells triggers TGFB1 secretion, which in turn limits the cytotoxic programming of intraepithelial CD8-positive alpha-beta T cells, distinguishing harmless from pathogenic antigens. In MHC-E-rich tumor microenvironment, acts as an immune inhibitory checkpoint and may contribute to progressive loss of effector functions of NK cells and tumor-specific T cells, a state known as cell exhaustion. Upon MHC-E-peptide binding, transmits intracellular signals through KLRC1 immunoreceptor tyrosine-based inhibition motifs (ITIMs) by recruiting INPP5D/SHIP-1 and INPPL1/SHIP-2 tyrosine phosphatases to ITIMs, and ultimately opposing signals transmitted by activating receptors through dephosphorylation of proximal signaling molecules. Its function is as follows. KLRD1-KLRC2 acts as an immune activating receptor. On cytotoxic lymphocyte subsets recognizes MHC-E loaded with signal sequence-derived peptides from non-classical MHC class Ib MHC-G molecules, likely playing a role in the generation and effector functions of adaptive NK cells and in maternal-fetal tolerance during pregnancy. Regulates the effector functions of terminally differentiated cytotoxic lymphocyte subsets, and in particular may play a role in adaptive NK cell response to viral infection. Upon MHC-E-peptide binding, transmits intracellular signals via the adapter protein TYROBP/DAP12, triggering the phosphorylation of proximal signaling molecules and cell activation. This Canis lupus familiaris (Dog) protein is Natural killer cells antigen CD94 (KLRD1).